We begin with the raw amino-acid sequence, 41 residues long: Photosystem II reaction center protein L (41 aa).

A helical transmembrane segment spans residues 20-40; sequence SLYLGLLLVFVVGILFSSYFF.

The protein belongs to the PsbL family. In terms of assembly, PSII is composed of 1 copy each of membrane proteins PsbA, PsbB, PsbC, PsbD, PsbE, PsbF, PsbH, PsbI, PsbJ, PsbK, PsbL, PsbM, PsbT, PsbX, PsbY, PsbZ, Psb30/Ycf12, peripheral proteins PsbO, CyanoQ (PsbQ), PsbU, PsbV and a large number of cofactors. It forms dimeric complexes.

It localises to the cellular thylakoid membrane. Functionally, one of the components of the core complex of photosystem II (PSII). PSII is a light-driven water:plastoquinone oxidoreductase that uses light energy to abstract electrons from H(2)O, generating O(2) and a proton gradient subsequently used for ATP formation. It consists of a core antenna complex that captures photons, and an electron transfer chain that converts photonic excitation into a charge separation. This subunit is found at the monomer-monomer interface and is required for correct PSII assembly and/or dimerization. This chain is Photosystem II reaction center protein L, found in Trichodesmium erythraeum (strain IMS101).